Reading from the N-terminus, the 777-residue chain is Glucocorticoid receptor (777 aa).

A compositionally biased stretch (basic and acidic residues) spans 1–14 (MDSKESLTPGKEEN). The tract at residues 1-22 (MDSKESLTPGKEENPSSVLTQE) is disordered. The interval 1–420 (MDSKESLTPG…TATTGPPPKL (420 aa)) is modulating. A Phosphothreonine modification is found at Thr8. Arg23 bears the Omega-N-methylarginine mark. Ser45, Ser113, Ser134, and Ser141 each carry phosphoserine. Positions 130 to 183 (NRSTSVPENPKSSASSSVSAAPKEKEFPKTHSDVSSEQQNLKGQTGTNGGNAKL) are disordered. The span at 134 to 150 (SVPENPKSSASSSVSAA) shows a compositional bias: low complexity. Residues 151 to 163 (PKEKEFPKTHSDV) are compositionally biased toward basic and acidic residues. Polar residues predominate over residues 164-174 (SSEQQNLKGQT). Phosphoserine is present on residues Ser203, Ser211, and Ser226. Lys258 participates in a covalent cross-link: Glycyl lysine isopeptide (Lys-Gly) (interchain with G-Cter in SUMO2). A Phosphoserine modification is found at Ser267. Residues Lys277 and Lys293 each participate in a glycyl lysine isopeptide (Lys-Gly) (interchain with G-Cter in SUMO); alternate cross-link. Residues Lys277 and Lys293 each participate in a glycyl lysine isopeptide (Lys-Gly) (interchain with G-Cter in SUMO2); alternate cross-link. Residues 394–414 (SSPSMRPDVSSPPSSSSTATT) are compositionally biased toward low complexity. A disordered region spans residues 394 to 415 (SSPSMRPDVSSPPSSSSTATTG). Ser404 bears the Phosphoserine mark. Lys419 participates in a covalent cross-link: Glycyl lysine isopeptide (Lys-Gly) (interchain with G-Cter in ubiquitin). 2 NR C4-type zinc fingers span residues 421-441 (CLVC…CGSC) and 457-481 (CAGR…YRKC). Positions 421-486 (CLVCSDEASG…RYRKCLQAGM (66 aa)) form a DNA-binding region, nuclear receptor. N6-acetyllysine occurs at positions 480, 492, 494, and 495. Positions 485–777 (GMNLEARKTK…NIRKLLFHQK (293 aa)) are interaction with CLOCK. The segment at 487 to 523 (NLEARKTKKKIKGIQQATTGVSQETSENPANKTIVPA) is hinge. The 235-residue stretch at 524 to 758 (TLPQLTPTLV…FPEMLAEIIT (235 aa)) folds into the NR LBD domain. The tract at residues 532–697 (LVSLLEVIEP…EIRMTYIKEL (166 aa)) is interaction with CRY1. Lys703 is covalently cross-linked (Glycyl lysine isopeptide (Lys-Gly) (interchain with G-Cter in SUMO)).

It belongs to the nuclear hormone receptor family. NR3 subfamily. In terms of assembly, heteromultimeric cytoplasmic complex with HSP90AA1, HSPA1A/HSPA1B, and FKBP5 or another immunophilin such as PPID, STIP1, or the immunophilin homolog PPP5C. Upon ligand binding FKBP5 dissociates from the complex and FKBP4 takes its place, thereby linking the complex to dynein and mediating transport to the nucleus, where the complex dissociates. Probably forms a complex composed of chaperones HSP90 and HSP70, co-chaperones CDC37, PPP5C, TSC1 and client protein TSC2, CDK4, AKT, RAF1 and NR3C1; this complex does not contain co-chaperones STIP1/HOP and PTGES3/p23. Directly interacts with UNC45A. Binds to DNA as a homodimer, and as heterodimer with NR3C2 or the retinoid X receptor. Binds STAT5A and STAT5B homodimers and heterodimers. Interacts with NRIP1, POU2F1, POU2F2 and TRIM28. Interacts with several coactivator complexes, including the SMARCA4 complex, CREBBP/EP300, TADA2L (Ada complex) and p160 coactivators such as NCOA2 and NCOA6. Interaction with BAG1 inhibits transactivation. Interacts with HEXIM1 and TGFB1I1. Interacts with NCOA1. Interacts with NCOA3, SMARCA4, SMARCC1, SMARCD1, and SMARCE1. Interacts with CLOCK, CRY1 and CRY2 in a ligand-dependent fashion. Interacts with CIART. Interacts with RWDD3. Interacts with UBE2I/UBC9 and this interaction is enhanced in the presence of RWDD3. Interacts with GRIP1. Interacts with NR4A3 (via nuclear receptor DNA-binding domain), represses transcription activity of NR4A3 on the POMC promoter Nur response element (NurRE). Directly interacts with PNRC2 to attract and form a complex with UPF1 and DCP1A; the interaction leads to rapid mRNA degradation. Interacts with GSK3B. Interacts with FNIP1 and FNIP2. Interacts (via C-terminus) with HNRNPU (via C-terminus). Interacts with MCM3AP. Interacts (via domain NR LBD) with HSP90AA1 and HSP90AB1. In the absence of hormonal ligand, interacts with TACC1. Interacts (via NR LBD domain) with ZNF764 (via KRAB domain); the interaction regulates transcription factor activity of NR3C1 by directing its actions toward certain biologic pathways. In terms of processing, acetylation by CLOCK reduces its binding to glucocorticoid response elements and its transcriptional activity. Increased proteasome-mediated degradation in response to glucocorticoids. Post-translationally, phosphorylated in the absence of hormone; becomes hyperphosphorylated in the presence of glucocorticoid. The Ser-203, Ser-226 and Ser-404-phosphorylated forms are mainly cytoplasmic, and the Ser-211-phosphorylated form is nuclear. Phosphorylation at Ser-211 increases transcriptional activity. Phosphorylation at Ser-203, Ser-226 and Ser-404 decreases signaling capacity. Phosphorylation at Ser-404 may protect from glucocorticoid-induced apoptosis. Phosphorylation at Ser-203 and Ser-211 is not required in regulation of chromosome segregation. May be dephosphorylated by PPP5C, attenuates NR3C1 action. In terms of processing, ubiquitinated by UBR5, leading to its degradation: UBR5 specifically recognizes and binds ligand-bound NR3C1 when it is not associated with coactivators (NCOAs). In presence of NCOAs, the UBR5-degron is not accessible, preventing its ubiquitination and degradation. Sumoylation at Lys-277 and Lys-293 negatively regulates its transcriptional activity. Sumoylation at Lys-703 positively regulates its transcriptional activity in the presence of RWDD3. Sumoylation at Lys-277 and Lys-293 is dispensable whereas sumoylation at Lys-703 is critical for the stimulatory effect of RWDD3 on its transcriptional activity. Heat shock increases sumoylation in a RWDD3-dependent manner.

The protein resides in the cytoplasm. The protein localises to the nucleus. It is found in the mitochondrion. It localises to the cytoskeleton. Its subcellular location is the spindle. The protein resides in the microtubule organizing center. The protein localises to the centrosome. It is found in the chromosome. It localises to the nucleoplasm. Receptor for glucocorticoids (GC). Has a dual mode of action: as a transcription factor that binds to glucocorticoid response elements (GRE), both for nuclear and mitochondrial DNA, and as a modulator of other transcription factors. Affects inflammatory responses, cellular proliferation and differentiation in target tissues. Involved in chromatin remodeling. Plays a role in rapid mRNA degradation by binding to the 5' UTR of target mRNAs and interacting with PNRC2 in a ligand-dependent manner which recruits the RNA helicase UPF1 and the mRNA-decapping enzyme DCP1A, leading to RNA decay. Could act as a coactivator for STAT5-dependent transcription upon growth hormone (GH) stimulation and could reveal an essential role of hepatic GR in the control of body growth. Mediates glucocorticoid-induced apoptosis. Promotes accurate chromosome segregation during mitosis. May act as a tumor suppressor. May play a negative role in adipogenesis through the regulation of lipolytic and antilipogenic gene expression. The chain is Glucocorticoid receptor (NR3C1) from Saguinus oedipus (Cotton-top tamarin).